Reading from the N-terminus, the 145-residue chain is MPGVSVRDVPAQDFINAYAQFLQRQGKLEVPGYVDIVKTSAGNDLPPQEAETWFYKRAASIARHIYLRKQVGVGALNKLYGGAKNRGFRPHKHVDASGSINRKCVQALQKIGVLEISPKGGRRISENGQRDLDRIAAQTLEEDDE.

The interval 120–145 (GGRRISENGQRDLDRIAAQTLEEDDE) is disordered. A compositionally biased stretch (basic and acidic residues) spans 123–134 (RISENGQRDLDR).

The protein belongs to the eukaryotic ribosomal protein eS19 family. As to quaternary structure, component of the small ribosomal subunit. Mature ribosomes consist of a small (40S) and a large (60S) subunit. The 40S subunit contains about 32 different proteins and 1 molecule of RNA (18S). The 60S subunit contains 45 different proteins and 3 molecules of RNA (25S, 5.8S and 5S).

Its subcellular location is the cytoplasm. Component of the ribosome, a large ribonucleoprotein complex responsible for the synthesis of proteins in the cell. The small ribosomal subunit (SSU) binds messenger RNAs (mRNAs) and translates the encoded message by selecting cognate aminoacyl-transfer RNA (tRNA) molecules. The large subunit (LSU) contains the ribosomal catalytic site termed the peptidyl transferase center (PTC), which catalyzes the formation of peptide bonds, thereby polymerizing the amino acids delivered by tRNAs into a polypeptide chain. The nascent polypeptides leave the ribosome through a tunnel in the LSU and interact with protein factors that function in enzymatic processing, targeting, and the membrane insertion of nascent chains at the exit of the ribosomal tunnel. RPS19A is required for proper maturation of the small (40S) ribosomal subunit. This Candida albicans (strain SC5314 / ATCC MYA-2876) (Yeast) protein is Small ribosomal subunit protein eS19 (RPS19A).